Here is a 472-residue protein sequence, read N- to C-terminus: Glutamine synthetase (472 aa).

The region spanning 17–101 is the GS beta-grasp domain; sequence YDIKFVLLRF…LRCSIYEPST (85 aa). Residues 109–472 enclose the GS catalytic domain; the sequence is PRSIAIRAEN…HPVEFEMYYA (364 aa). Mg(2+)-binding residues include Glu-134 and Glu-136. ATP is bound at residue Glu-212. Positions 217 and 225 each coordinate Mg(2+). L-glutamate contacts are provided by residues 269-270 and Gly-270; that span reads NG. Mg(2+) is bound at residue His-274. ATP is bound by residues 276-278 and Ser-278; that span reads NMS. L-glutamate-binding residues include Arg-326, Glu-332, and Arg-344. ATP-binding residues include Arg-344, Arg-349, and Lys-357. Glu-362 serves as a coordination point for Mg(2+). An L-glutamate-binding site is contributed by Arg-364. The residue at position 402 (Tyr-402) is an O-AMP-tyrosine.

It belongs to the glutamine synthetase family. As to quaternary structure, oligomer of 12 subunits arranged in the form of two hexameric ring. Mg(2+) is required as a cofactor.

It is found in the cytoplasm. The enzyme catalyses L-glutamate + NH4(+) + ATP = L-glutamine + ADP + phosphate + H(+). The activity of this enzyme could be controlled by adenylation under conditions of abundant glutamine. Its function is as follows. Catalyzes the ATP-dependent biosynthesis of glutamine from glutamate and ammonia. This is Glutamine synthetase from Pasteurella multocida (strain Pm70).